The sequence spans 386 residues: MIRESFLPPFRPCIGEEEINEVIDTLKSDWITMGPKTLKFEELFRNYIGSKFAISLNSCTAGLHLSLVALNIKDKDEVITTPYTFAATGNVIVHQRAKPVFVDIDKETYNINVEEIENAITERTKAIIPVHYAGHPCEMDEILKIARDYDLYVIEDAAHALGAEYKGKKIGTIGDTTSFSFYATKNITTGEGGMVTTDNEEIAEKIKILRLHGISRDAWKRYSSEGSWYYEIIECGYKYNMTDIQASIGIHQLKKAEIMRKRREEIAKIYNEEFENLEGLITPTIKKHVKHAWHLYPLLINIDRLKINRTKFIEELKKQNIGTSVHFIPLHLHPFYRKTFGYKKGDFPNAEWVYEREISLPIYPKMTDDDVIDVVNAVKKIVSENR.

Lysine 185 is modified (N6-(pyridoxal phosphate)lysine).

This sequence belongs to the DegT/DnrJ/EryC1 family. It depends on pyridoxal 5'-phosphate as a cofactor.

This is an uncharacterized protein from Methanocaldococcus jannaschii (strain ATCC 43067 / DSM 2661 / JAL-1 / JCM 10045 / NBRC 100440) (Methanococcus jannaschii).